The sequence spans 143 residues: Histone H2A.z (143 aa).

This sequence belongs to the histone H2A family. In terms of assembly, the nucleosome is a histone octamer containing two molecules each of H2A, H2B, H3 and H4 assembled in one H3-H4 heterotetramer and two H2A-H2B heterodimers. The octamer wraps approximately 147 bp of DNA.

It is found in the nucleus. It localises to the chromosome. Core component of nucleosome which plays a central role in DNA double strand break (DSB) repair. Nucleosomes wrap and compact DNA into chromatin, limiting DNA accessibility to the cellular machineries which require DNA as a template. Histones thereby play a central role in transcription regulation, DNA repair, DNA replication and chromosomal stability. DNA accessibility is regulated via a complex set of post-translational modifications of histones, also called histone code, and nucleosome remodeling. The protein is Histone H2A.z (H2AZ) of Dictyostelium discoideum (Social amoeba).